We begin with the raw amino-acid sequence, 410 residues long: Mating-type locus allele B5 protein (410 aa).

Residues 1 to 110 (MSSDPNFSLT…FNVVSPAVVC (110 aa)) form a variable domain between B alleles region. The segment at residues 107 to 184 (AVVCRNLSED…NARRRSGWSH (78 aa)) is a DNA-binding region (homeobox; TALE-type). Residues 111–410 (RNLSEDLPAY…PFLCLSVAFV (300 aa)) form a highly conserved between B alleles region. Disordered regions lie at residues 201–241 (VRAK…TPAD), 275–336 (NKKT…PELS), and 366–395 (ILQSPTVKARGNRKVKALPKRAGKQQPDEV). Low complexity predominate over residues 206-222 (SSSNQSTPPSPTSEYPS). Positions 276 to 308 (KKTPKPGMPRPVTTVTKRQPARKTKPAAKPKSR) match the Nuclear localization signal motif. Residues 294-307 (QPARKTKPAAKPKS) are compositionally biased toward basic residues. The span at 312–336 (PRASTTPSIDSTLDSSKLESTPELS) shows a compositional bias: polar residues. The interval 333–410 (PELSMCSTAD…PFLCLSVAFV (78 aa)) is not essential for B5 function. The span at 375-388 (RGNRKVKALPKRAG) shows a compositional bias: basic residues.

Belongs to the TALE/M-ATYP homeobox family.

It is found in the nucleus. In terms of biological role, the B locus has at least 25 alleles, and any combination of two different B alleles yields a multimeric regulatory protein, that activates genes responsible for the pathogenicity and for the sexual development of the fungus within the corn plant. The protein is Mating-type locus allele B5 protein of Mycosarcoma maydis (Corn smut fungus).